A 114-amino-acid chain; its full sequence is Non-specific lipid-transfer protein 2 (114 aa).

A signal peptide spans 1–23 (MEMVNKIACFVLLCMVVVAPHAE). 4 cysteine pairs are disulfide-bonded: cysteine 27/cysteine 73, cysteine 37/cysteine 50, cysteine 51/cysteine 96, and cysteine 71/cysteine 110.

It belongs to the plant LTP family.

Functionally, plant non-specific lipid-transfer proteins transfer phospholipids as well as galactolipids across membranes. May play a role in wax or cutin deposition in the cell walls of expanding epidermal cells and certain secretory tissues. This Solanum chilense (Tomato) protein is Non-specific lipid-transfer protein 2.